An 88-amino-acid chain; its full sequence is Small ribosomal subunit protein uS19 (88 aa).

This sequence belongs to the universal ribosomal protein uS19 family.

Functionally, protein S19 forms a complex with S13 that binds strongly to the 16S ribosomal RNA. This chain is Small ribosomal subunit protein uS19, found in Chlamydia felis (strain Fe/C-56) (Chlamydophila felis).